We begin with the raw amino-acid sequence, 94 residues long: Large ribosomal subunit protein bL27 (94 aa).

Positions 1 to 9 are excised as a propeptide; the sequence is MNLANLQLF. The tract at residues 11–34 is disordered; it reads HKKGGGSTSNGRDSQAKRLGAKAA.

It belongs to the bacterial ribosomal protein bL27 family. Post-translationally, the N-terminus is cleaved by ribosomal processing cysteine protease Prp.

The polypeptide is Large ribosomal subunit protein bL27 (Streptococcus pyogenes serotype M3 (strain ATCC BAA-595 / MGAS315)).